A 571-amino-acid chain; its full sequence is Podocalyxin (571 aa).

An N-terminal signal peptide occupies residues 1–22; that stretch reads MRPAPPPPLLLLLLLLPPPSLS. The Extracellular portion of the chain corresponds to 23–474; the sequence is HDGTIIAATS…EETEDRFSMP (452 aa). The segment at 94–361 is disordered; it reads NTVIAPDQDE…QGDDRIKCES (268 aa). A compositionally biased stretch (polar residues) spans 106-116; that stretch reads STNPTIATSDS. N-linked (GlcNAc...) asparagine glycosylation is present at N123. 4 stretches are compositionally biased toward polar residues: residues 126–144, 151–169, 176–203, and 218–245; these read ILPSATNSMKPDTPVTQTA, NPGTTVSHMTSENTEQTTS, KPSSITPALTSIITPTSPRQPSANSTTL, and TASSSLGTKVVPSSSLYGTSPTRTSSVT. N199 is a glycosylation site (N-linked (GlcNAc...) asparagine). The span at 282 to 300 shows a compositional bias: low complexity; that stretch reads TTSLPSETESLESPSSESP. Residues 301 to 311 show a composition bias toward pro residues; the sequence is SQPPKLRPTGP. Low complexity predominate over residues 312–322; sequence PSSGSSGPAAS. 2 N-linked (GlcNAc...) asparagine glycosylation sites follow: N373 and N383. Residues 475–495 traverse the membrane as a helical segment; sequence LIITIVCMASFLLLVAALYGC. Over 496-571 the chain is Cytoplasmic; the sequence is CHQRLSQRKD…DLDEEEDTHL (76 aa). Residue T531 is modified to Phosphothreonine. At S550 the chain carries Phosphoserine. At T569 the chain carries Phosphothreonine.

It belongs to the podocalyxin family. As to quaternary structure, found in a complex with EZR, PODXL and NHERF2. Associates with the actin cytoskeleton through complex formation with EZR and NHERF2. Interacts (via the C-terminal PDZ-binding motif DTHL) with NHERF1 (via the PDZ domains); interaction is not detected in glomerular epithelium cells. Interacts (via the C-terminal PDZ-binding motif DTHL) with NHERF2 (via the PDZ 1 domain); interaction is detected in glomerular epithelium cells. Interacts with EZR. Monomer; when associated with the membrane raft. Oligomer; when integrated in the apical membrane. Interacts with NHERF2. Interacts (via the C-terminal PDZ-binding motif DTHL) with NHERF1 (via the PDZ domains); the interaction take place early in the secretory pathway and is necessary for its apical membrane sorting. Post-translationally, N- and O-linked glycosylated. Sialoglycoprotein. As to expression, expressed in glomerular and tubular epithelial cells and peritubular capillaries of the kidney (at protein level). Expressed in heart, lung, renal cortex and medulla, kidney and muscle.

The protein localises to the apical cell membrane. It localises to the membrane raft. Its subcellular location is the cell projection. It is found in the lamellipodium. The protein resides in the filopodium. The protein localises to the ruffle. It localises to the microvillus. Its subcellular location is the membrane. In terms of biological role, involved in the regulation of both adhesion and cell morphology and cancer progression. Functions as an anti-adhesive molecule that maintains an open filtration pathway between neighboring foot processes in the podocyte by charge repulsion. Acts as a pro-adhesive molecule, enhancing the adherence of cells to immobilized ligands, increasing the rate of migration and cell-cell contacts in an integrin-dependent manner. Induces the formation of apical actin-dependent microvilli. Involved in the formation of a preapical plasma membrane subdomain to set up initial epithelial polarization and the apical lumen formation during renal tubulogenesis. Plays a role in cancer development and aggressiveness by inducing cell migration and invasion through its interaction with the actin-binding protein EZR. Affects EZR-dependent signaling events, leading to increased activities of the MAPK and PI3K pathways in cancer cells. This is Podocalyxin (PODXL) from Canis lupus familiaris (Dog).